A 440-amino-acid chain; its full sequence is Proline--tRNA ligase (440 aa).

It belongs to the class-II aminoacyl-tRNA synthetase family. ProS type 2 subfamily. As to quaternary structure, homodimer.

It localises to the cytoplasm. The enzyme catalyses tRNA(Pro) + L-proline + ATP = L-prolyl-tRNA(Pro) + AMP + diphosphate. In terms of biological role, catalyzes the attachment of proline to tRNA(Pro) in a two-step reaction: proline is first activated by ATP to form Pro-AMP and then transferred to the acceptor end of tRNA(Pro). The polypeptide is Proline--tRNA ligase (Agrobacterium fabrum (strain C58 / ATCC 33970) (Agrobacterium tumefaciens (strain C58))).